The following is a 1423-amino-acid chain: Protein phosphatase Slingshot homolog 2 (1423 aa).

A disordered region spans residues 1-37 (MALVTVQRSPTPSTTSSPCASEADSGEEECRSQPRSI). The segment covering 9–18 (SPTPSTTSSP) has biased composition (low complexity). Residues Ser-17, Ser-25, and Ser-36 each carry the phosphoserine modification. The 56-residue stretch at 248 to 303 (ERTERLIKTKLREIMMQKDLENITSKEIRTELEMQMVCNLREFKEFIDNEMIVILG) folds into the DEK-C domain. Residues 307-448 (SPTQIFEHVF…LEEYQGILLA (142 aa)) enclose the Tyrosine-protein phosphatase domain. The active-site Phosphocysteine intermediate is Cys-392. Phosphoserine is present on residues Ser-461, Ser-487, Ser-534, Ser-631, and Ser-633. Disordered regions lie at residues 617–641 (TSPLKDPPMSPDPESPSPQPSCQTE), 664–684 (QETRSRSFSHSRMEELGGGRN), 696–728 (PSKVTADDQRSSSLSNTPHASEESSMDEEQSKA), 797–825 (ENKPGHMEQDEDSCTAQPELAKDSGMCNP), 840–862 (EGEPAEGEQELQGSGMHPGAKWY), 877–954 (LRQE…NATV), 962–981 (FDHLPDPQEGPGSDTGTQQE), 1019–1041 (TSPNHTGPGSEIATSEKSGEQGL), 1070–1108 (SLHPQVLPLPHSSSPEHNRPTDHPTSILSSPEDRGSSLS), and 1144–1179 (TEQSSTTDEPSAEQVSWEESQESPLSSGSEVPYKDS). Over residues 621 to 635 (KDPPMSPDPESPSPQ) the composition is skewed to pro residues. Basic and acidic residues predominate over residues 664–680 (QETRSRSFSHSRMEELG). Over residues 889–904 (TCTSLSTRKNSKNDSS) the composition is skewed to polar residues. A compositionally biased stretch (basic and acidic residues) spans 910 to 932 (PKGKSDEAPPEHSFVLKEPEMSK). Residues 941 to 953 (EAGSLSHSEQNAT) show a composition bias toward polar residues. Over residues 1019–1034 (TSPNHTGPGSEIATSE) the composition is skewed to polar residues. Residues 1144–1172 (TEQSSTTDEPSAEQVSWEESQESPLSSGS) are compositionally biased toward polar residues. Residue Ser-1217 is modified to Phosphoserine. Thr-1422 is modified (phosphothreonine).

Belongs to the protein-tyrosine phosphatase family. In terms of assembly, interacts with filamentous actin.

Its subcellular location is the cytoplasm. It is found in the cytoskeleton. It localises to the cell junction. The protein localises to the focal adhesion. The protein resides in the cytoplasmic vesicle. Its subcellular location is the secretory vesicle. It is found in the acrosome. It carries out the reaction O-phospho-L-tyrosyl-[protein] + H2O = L-tyrosyl-[protein] + phosphate. The catalysed reaction is O-phospho-L-seryl-[protein] + H2O = L-seryl-[protein] + phosphate. The enzyme catalyses O-phospho-L-threonyl-[protein] + H2O = L-threonyl-[protein] + phosphate. Protein phosphatase which regulates actin filament dynamics. Dephosphorylates and activates the actin binding/depolymerizing factor cofilin, which subsequently binds to actin filaments and stimulates their disassembly. Inhibitory phosphorylation of cofilin is mediated by LIMK1, which may also be dephosphorylated and inactivated by this protein. Required for spermatogenesis. Involved in acrosome biogenesis, probably by regulating cofilin-mediated actin cytoskeleton remodeling during proacrosomal vesicle fusion and/or Golgi to perinuclear vesicle trafficking. The chain is Protein phosphatase Slingshot homolog 2 (SSH2) from Homo sapiens (Human).